We begin with the raw amino-acid sequence, 371 residues long: Queuine tRNA-ribosyltransferase (371 aa).

Asp89 acts as the Proton acceptor in catalysis. Residues 89–93 (DSGGF), Asp143, Gln185, and Gly212 contribute to the substrate site. Positions 243-249 (GVGKPED) are RNA binding. Asp262 functions as the Nucleophile in the catalytic mechanism. Residues 267–271 (TRNAR) form an RNA binding; important for wobble base 34 recognition region. Zn(2+) is bound by residues Cys300, Cys302, Cys305, and His331.

It belongs to the queuine tRNA-ribosyltransferase family. Homodimer. Within each dimer, one monomer is responsible for RNA recognition and catalysis, while the other monomer binds to the replacement base PreQ1. It depends on Zn(2+) as a cofactor.

It catalyses the reaction 7-aminomethyl-7-carbaguanine + guanosine(34) in tRNA = 7-aminomethyl-7-carbaguanosine(34) in tRNA + guanine. Its pathway is tRNA modification; tRNA-queuosine biosynthesis. Catalyzes the base-exchange of a guanine (G) residue with the queuine precursor 7-aminomethyl-7-deazaguanine (PreQ1) at position 34 (anticodon wobble position) in tRNAs with GU(N) anticodons (tRNA-Asp, -Asn, -His and -Tyr). Catalysis occurs through a double-displacement mechanism. The nucleophile active site attacks the C1' of nucleotide 34 to detach the guanine base from the RNA, forming a covalent enzyme-RNA intermediate. The proton acceptor active site deprotonates the incoming PreQ1, allowing a nucleophilic attack on the C1' of the ribose to form the product. After dissociation, two additional enzymatic reactions on the tRNA convert PreQ1 to queuine (Q), resulting in the hypermodified nucleoside queuosine (7-(((4,5-cis-dihydroxy-2-cyclopenten-1-yl)amino)methyl)-7-deazaguanosine). In Azotobacter vinelandii (strain DJ / ATCC BAA-1303), this protein is Queuine tRNA-ribosyltransferase.